The chain runs to 144 residues: Large ribosomal subunit protein uL11 (144 aa).

It belongs to the universal ribosomal protein uL11 family. In terms of assembly, part of the ribosomal stalk of the 50S ribosomal subunit. Interacts with L10 and the large rRNA to form the base of the stalk. L10 forms an elongated spine to which L12 dimers bind in a sequential fashion forming a multimeric L10(L12)X complex. In terms of processing, one or more lysine residues are methylated.

Its function is as follows. Forms part of the ribosomal stalk which helps the ribosome interact with GTP-bound translation factors. The chain is Large ribosomal subunit protein uL11 from Corynebacterium glutamicum (strain R).